A 140-amino-acid polypeptide reads, in one-letter code: Secreted RxLR effector protein 37 (140 aa).

The signal sequence occupies residues 1 to 22 (MTYRLPFVAVILFVTAKHVVLA). The short motif at 57–76 (RFLRQLEKKPGVNDKRDEER) is the RxLR-dEER element.

This sequence belongs to the RxLR effector family.

Its subcellular location is the secreted. The protein localises to the host nucleus. It is found in the host cytoplasm. Functionally, secreted effector that completely suppresses the host cell death induced by cell death-inducing proteins. The protein is Secreted RxLR effector protein 37 of Plasmopara viticola (Downy mildew of grapevine).